The sequence spans 196 residues: dTTP/UTP pyrophosphatase (196 aa).

Catalysis depends on Asp72, which acts as the Proton acceptor.

Belongs to the Maf family. YhdE subfamily. A divalent metal cation is required as a cofactor.

The protein resides in the cytoplasm. The enzyme catalyses dTTP + H2O = dTMP + diphosphate + H(+). It carries out the reaction UTP + H2O = UMP + diphosphate + H(+). Its function is as follows. Nucleoside triphosphate pyrophosphatase that hydrolyzes dTTP and UTP. May have a dual role in cell division arrest and in preventing the incorporation of modified nucleotides into cellular nucleic acids. This chain is dTTP/UTP pyrophosphatase, found in Chlamydia caviae (strain ATCC VR-813 / DSM 19441 / 03DC25 / GPIC) (Chlamydophila caviae).